Consider the following 503-residue polypeptide: Probable cytosol aminopeptidase (503 aa).

Residues Lys-270 and Asp-275 each contribute to the Mn(2+) site. The active site involves Lys-282. Mn(2+)-binding residues include Asp-293, Asp-352, and Glu-354. Residue Arg-356 is part of the active site.

Belongs to the peptidase M17 family. It depends on Mn(2+) as a cofactor.

The protein localises to the cytoplasm. The enzyme catalyses Release of an N-terminal amino acid, Xaa-|-Yaa-, in which Xaa is preferably Leu, but may be other amino acids including Pro although not Arg or Lys, and Yaa may be Pro. Amino acid amides and methyl esters are also readily hydrolyzed, but rates on arylamides are exceedingly low.. It catalyses the reaction Release of an N-terminal amino acid, preferentially leucine, but not glutamic or aspartic acids.. Presumably involved in the processing and regular turnover of intracellular proteins. Catalyzes the removal of unsubstituted N-terminal amino acids from various peptides. The polypeptide is Probable cytosol aminopeptidase (Shigella boydii serotype 18 (strain CDC 3083-94 / BS512)).